A 430-amino-acid polypeptide reads, in one-letter code: uncharacterized protein (430 aa).

The protein resides in the cytoplasm. It localises to the nucleus. This is an uncharacterized protein from Schizosaccharomyces pombe (strain 972 / ATCC 24843) (Fission yeast).